We begin with the raw amino-acid sequence, 266 residues long: Phosphatidate cytidylyltransferase (266 aa).

The next 8 membrane-spanning stretches (helical) occupy residues 16–36 (VVLIVVAGLILYADNLLLFWA), 52–72 (LFQVKASFSLYLILVLSWVAA), 78–98 (PVECALISAMVMASVIAYQKA), 101–121 (SEAILPFLYPGVGFFALFGVY), 125–145 (GAVAIIWLLVVVVASDVGAFF), 164–184 (LEGALIGVVLASVLGSFVGMG), 186–206 (LSGGFLMALLFSFLIALMAVF), and 237–257 (LDSMLFGALSLHVLLYFLEIW).

The protein belongs to the CDS family.

The protein localises to the cell inner membrane. It catalyses the reaction a 1,2-diacyl-sn-glycero-3-phosphate + CTP + H(+) = a CDP-1,2-diacyl-sn-glycerol + diphosphate. It participates in phospholipid metabolism; CDP-diacylglycerol biosynthesis; CDP-diacylglycerol from sn-glycerol 3-phosphate: step 3/3. This is Phosphatidate cytidylyltransferase (cdsA) from Helicobacter pylori (strain J99 / ATCC 700824) (Campylobacter pylori J99).